Here is a 453-residue protein sequence, read N- to C-terminus: Ribulose bisphosphate carboxylase large chain (453 aa).

Residues 1 to 2 (MS) constitute a propeptide that is removed on maturation. N-acetylproline is present on proline 3. Position 14 is an N6,N6,N6-trimethyllysine (lysine 14). Positions 123 and 173 each coordinate substrate. Lysine 175 acts as the Proton acceptor in catalysis. Lysine 177 contributes to the substrate binding site. Residues lysine 201, aspartate 203, and glutamate 204 each coordinate Mg(2+). Residue lysine 201 is modified to N6-carboxylysine. Catalysis depends on histidine 294, which acts as the Proton acceptor. Substrate is bound by residues arginine 295, histidine 327, and serine 379.

Belongs to the RuBisCO large chain family. Type I subfamily. In terms of assembly, heterohexadecamer of 8 large chains and 8 small chains; disulfide-linked. The disulfide link is formed within the large subunit homodimers. Mg(2+) is required as a cofactor. In terms of processing, the disulfide bond which can form in the large chain dimeric partners within the hexadecamer appears to be associated with oxidative stress and protein turnover.

The protein resides in the plastid. The protein localises to the chloroplast. It catalyses the reaction 2 (2R)-3-phosphoglycerate + 2 H(+) = D-ribulose 1,5-bisphosphate + CO2 + H2O. It carries out the reaction D-ribulose 1,5-bisphosphate + O2 = 2-phosphoglycolate + (2R)-3-phosphoglycerate + 2 H(+). RuBisCO catalyzes two reactions: the carboxylation of D-ribulose 1,5-bisphosphate, the primary event in carbon dioxide fixation, as well as the oxidative fragmentation of the pentose substrate in the photorespiration process. Both reactions occur simultaneously and in competition at the same active site. This is Ribulose bisphosphate carboxylase large chain from Sherardia arvensis (Blue field-madder).